Here is a 256-residue protein sequence, read N- to C-terminus: MAVGKNKRLSKGKKGIKKRTVDPFSRKDEYSVKAPSTFQIRDVGKTLVNRTSGLKNANDSLKGRIFEVSLADLQNDEDHAFRKVKLRVDEIQGKNCLTNFHGLDFTTDKLRSLVRKWQSLIEANVTVKTTDDYLLRLFAIAFTKRRPNQIKKTTYARSSQIRAIRKKMTEIMQREAASCSLAQLTTKLIPEVIGREIEKATQGIYPLQNVHIRKVKLLKSPKFDLGALLNLHGESTTDDKGHKVEREFKEQVLESV.

The span at 1-18 (MAVGKNKRLSKGKKGIKK) shows a compositional bias: basic residues. Residues 1-20 (MAVGKNKRLSKGKKGIKKRT) are disordered. Alanine 2 carries the post-translational modification N-acetylalanine; partial.

The protein belongs to the eukaryotic ribosomal protein eS1 family. In terms of assembly, component of the small ribosomal subunit. Mature ribosomes consist of a small (40S) and a large (60S) subunit. The 40S subunit contains about 33 different proteins and 1 molecule of RNA (18S). The 60S subunit contains about 49 different proteins and 3 molecules of RNA (25S, 5.8S and 5S).

The protein resides in the cytoplasm. The sequence is that of Small ribosomal subunit protein eS1 (rps1) from Aspergillus terreus (strain NIH 2624 / FGSC A1156).